A 232-amino-acid chain; its full sequence is Enolase-phosphatase E1 (232 aa).

This sequence belongs to the HAD-like hydrolase superfamily. MasA/MtnC family. In terms of assembly, monomer. Mg(2+) serves as cofactor.

The enzyme catalyses 5-methylsulfanyl-2,3-dioxopentyl phosphate + H2O = 1,2-dihydroxy-5-(methylsulfanyl)pent-1-en-3-one + phosphate. It functions in the pathway amino-acid biosynthesis; L-methionine biosynthesis via salvage pathway; L-methionine from S-methyl-5-thio-alpha-D-ribose 1-phosphate: step 3/6. It participates in amino-acid biosynthesis; L-methionine biosynthesis via salvage pathway; L-methionine from S-methyl-5-thio-alpha-D-ribose 1-phosphate: step 4/6. Bifunctional enzyme that catalyzes the enolization of 2,3-diketo-5-methylthiopentyl-1-phosphate (DK-MTP-1-P) into the intermediate 2-hydroxy-3-keto-5-methylthiopentenyl-1-phosphate (HK-MTPenyl-1-P), which is then dephosphorylated to form the acireductone 1,2-dihydroxy-3-keto-5-methylthiopentene (DHK-MTPene). This is Enolase-phosphatase E1 from Xylella fastidiosa (strain Temecula1 / ATCC 700964).